The sequence spans 420 residues: UDP-N-acetylglucosamine 1-carboxyvinyltransferase (420 aa).

Residue 22–23 (KN) coordinates phosphoenolpyruvate. Position 92 (Arg-92) interacts with UDP-N-acetyl-alpha-D-glucosamine. Cys-116 (proton donor) is an active-site residue. Cys-116 carries the post-translational modification 2-(S-cysteinyl)pyruvic acid O-phosphothioketal. UDP-N-acetyl-alpha-D-glucosamine is bound by residues 121-125 (RPVDL), 161-164 (KVSV), Asp-306, and Ile-328.

This sequence belongs to the EPSP synthase family. MurA subfamily.

The protein resides in the cytoplasm. It carries out the reaction phosphoenolpyruvate + UDP-N-acetyl-alpha-D-glucosamine = UDP-N-acetyl-3-O-(1-carboxyvinyl)-alpha-D-glucosamine + phosphate. It functions in the pathway cell wall biogenesis; peptidoglycan biosynthesis. Functionally, cell wall formation. Adds enolpyruvyl to UDP-N-acetylglucosamine. In Yersinia pseudotuberculosis serotype O:1b (strain IP 31758), this protein is UDP-N-acetylglucosamine 1-carboxyvinyltransferase.